The following is a 331-amino-acid chain: Lipoate-protein ligase LplJ (331 aa).

In terms of domain architecture, BPL/LPL catalytic spans 27–214; sequence DPEQQYLLFY…HIFNTNDVGN (188 aa). Residues arginine 69, 74–77, and lysine 131 each bind ATP; that span reads GAVY. Lysine 131 serves as a coordination point for (R)-lipoate.

This sequence belongs to the LplA family.

It localises to the cytoplasm. The catalysed reaction is L-lysyl-[lipoyl-carrier protein] + (R)-lipoate + ATP = N(6)-[(R)-lipoyl]-L-lysyl-[lipoyl-carrier protein] + AMP + diphosphate + H(+). The protein operates within protein modification; protein lipoylation via exogenous pathway; protein N(6)-(lipoyl)lysine from lipoate: step 1/2. It functions in the pathway protein modification; protein lipoylation via exogenous pathway; protein N(6)-(lipoyl)lysine from lipoate: step 2/2. Functionally, catalyzes both the ATP-dependent activation of exogenously supplied lipoate to lipoyl-AMP and the transfer of the activated lipoyl onto the lipoyl domains of lipoate-dependent enzymes. Is also able to use octanoate as substrate. This Bacillus subtilis (strain 168) protein is Lipoate-protein ligase LplJ (lplJ).